A 574-amino-acid chain; its full sequence is Serine hydroxymethyltransferase (574 aa).

180–182 (GHL) contacts (6S)-5,6,7,8-tetrahydrofolate. N6-(pyridoxal phosphate)lysine is present on K288. Position 306 (E306) interacts with (6S)-5,6,7,8-tetrahydrofolate.

It belongs to the SHMT family. In terms of assembly, homodimer. It depends on pyridoxal 5'-phosphate as a cofactor.

It is found in the cytoplasm. It catalyses the reaction (6R)-5,10-methylene-5,6,7,8-tetrahydrofolate + glycine + H2O = (6S)-5,6,7,8-tetrahydrofolate + L-serine. Its pathway is one-carbon metabolism; tetrahydrofolate interconversion. It functions in the pathway amino-acid biosynthesis; glycine biosynthesis; glycine from L-serine: step 1/1. Its function is as follows. Catalyzes the reversible interconversion of serine and glycine with tetrahydrofolate (THF) serving as the one-carbon carrier. This reaction serves as the major source of one-carbon groups required for the biosynthesis of purines, thymidylate, methionine, and other important biomolecules. Also exhibits THF-independent aldolase activity toward beta-hydroxyamino acids, producing glycine and aldehydes, via a retro-aldol mechanism. The protein is Serine hydroxymethyltransferase of Treponema pallidum (strain Nichols).